The chain runs to 508 residues: Amphoterin-induced protein 3 (508 aa).

The signal sequence occupies residues 1 to 19 (MAWLVLLGLLLCMLGAGSG). Residues 20–383 (TSDLEGVLPP…PRPEPEAFNT (364 aa)) lie on the Extracellular side of the membrane. An LRRNT domain is found at 25-61 (GVLPPDPHNCPNKCVCAADVLSCAGRGLQDLPAALPA). 2 disulfides stabilise this stretch: C34-C40 and C38-C47. LRR repeat units lie at residues 62-83 (TAAE…WLAP), 86-107 (RLRA…VFTN), 110-131 (GLRI…DLDG), 134-155 (ELEK…AFQG), 158-178 (MLSH…NHLH), and 184-207 (RLRT…AALP). Residue N107 is glycosylated (N-linked (GlcNAc...) asparagine). In terms of domain architecture, LRRCT spans 219 to 275 (NPLPCDCSLYHLLRRWHQRGLSALHDFEREYTCLAFKVAESRVRFFEHSRVFKNCSV). 3 disulfides stabilise this stretch: C223-C251, C225-C273, and C300-C352. Residues N272, N301, N362, and N368 are each glycosylated (N-linked (GlcNAc...) asparagine). Positions 279 to 370 (PGLELPEEEL…HNQTLEYNVS (92 aa)) constitute an Ig-like C2-type domain. Residues 384 to 404 (GFTTLLGCIVGLVLVLLYLFA) form a helical membrane-spanning segment. The Cytoplasmic portion of the chain corresponds to 405–508 (PPCRGCCRCC…STGSEGLMMS (104 aa)).

It belongs to the immunoglobulin superfamily. AMIGO family. In terms of assembly, binds AMIGO1 or AMIGO2.

It localises to the membrane. In terms of biological role, may mediate heterophilic cell-cell interaction. May contribute to signal transduction through its intracellular domain. This chain is Amphoterin-induced protein 3, found in Rattus norvegicus (Rat).